Reading from the N-terminus, the 90-residue chain is Molybdopterin synthase sulfur carrier subunit (90 aa).

Position 90 is a 1-thioglycine; alternate (G90). G90 bears the Glycyl adenylate; alternate mark.

It belongs to the MoaD family. MOCS2A subfamily. In terms of assembly, heterotetramer; composed of 2 small (Mocs2A) and 2 large (Mocs2B) subunits. Post-translationally, C-terminal thiocarboxylation occurs in 2 steps, it is first acyl-adenylated (-COAMP) via the hesA/moeB/thiF part of MOCS3, then thiocarboxylated (-COSH) via the rhodanese domain of MOCS3.

The protein resides in the cytoplasm. It participates in cofactor biosynthesis; molybdopterin biosynthesis. Its function is as follows. Acts as a sulfur carrier required for molybdopterin biosynthesis. Component of the molybdopterin synthase complex that catalyzes the conversion of precursor Z into molybdopterin by mediating the incorporation of 2 sulfur atoms into precursor Z to generate a dithiolene group. In the complex, serves as sulfur donor by being thiocarboxylated (-COSH) at its C-terminus by MOCS3. After interaction with Mocs2B, the sulfur is then transferred to precursor Z to form molybdopterin. The protein is Molybdopterin synthase sulfur carrier subunit of Drosophila ananassae (Fruit fly).